An 89-amino-acid chain; its full sequence is UPF0297 protein OB2008 (89 aa).

The protein belongs to the UPF0297 family.

The chain is UPF0297 protein OB2008 from Oceanobacillus iheyensis (strain DSM 14371 / CIP 107618 / JCM 11309 / KCTC 3954 / HTE831).